Consider the following 382-residue polypeptide: Flap endonuclease 1-B (382 aa).

Positions 1–104 (MGIHGLAKLI…GELAKRSERR (104 aa)) are N-domain. A Mg(2+)-binding site is contributed by aspartate 34. Residues arginine 47 and arginine 70 each coordinate DNA. Positions 86, 158, 160, 179, and 181 each coordinate Mg(2+). An I-domain region spans residues 122-253 (NIEKFNKRLV…KRAIDLIRQH (132 aa)). A DNA-binding site is contributed by glutamate 158. Residues glycine 231 and aspartate 233 each contribute to the DNA site. Aspartate 233 serves as a coordination point for Mg(2+). Residues 336 to 344 (TQGRLDDFF) form an interaction with PCNA region. The segment at 352–382 (STKRKEVESKGSTKKKSKTGGTPAGKFKRGK) is disordered.

Belongs to the XPG/RAD2 endonuclease family. FEN1 subfamily. In terms of assembly, interacts with PCNA. Three molecules of fen1 bind to one PCNA trimer with each molecule binding to one PCNA monomer. PCNA stimulates the nuclease activity without altering cleavage specificity. Mg(2+) serves as cofactor. Post-translationally, phosphorylated. Phosphorylation upon DNA damage induces relocalization to the nuclear plasma.

The protein resides in the nucleus. It localises to the nucleolus. Its subcellular location is the nucleoplasm. The protein localises to the mitochondrion. Functionally, structure-specific nuclease with 5'-flap endonuclease and 5'-3' exonuclease activities involved in DNA replication and repair. During DNA replication, cleaves the 5'-overhanging flap structure that is generated by displacement synthesis when DNA polymerase encounters the 5'-end of a downstream Okazaki fragment. It enters the flap from the 5'-end and then tracks to cleave the flap base, leaving a nick for ligation. Also involved in the long patch base excision repair (LP-BER) pathway, by cleaving within the apurinic/apyrimidinic (AP) site-terminated flap. Acts as a genome stabilization factor that prevents flaps from equilibrating into structures that lead to duplications and deletions. Also possesses 5'-3' exonuclease activity on nicked or gapped double-stranded DNA, and exhibits RNase H activity. Also involved in replication and repair of rDNA and in repairing mitochondrial DNA. The polypeptide is Flap endonuclease 1-B (fen1-b) (Xenopus laevis (African clawed frog)).